Here is a 160-residue protein sequence, read N- to C-terminus: Protein cornichon homolog 2 (160 aa).

Residues 1–10 (MAFTFAAFCY) are Cytoplasmic-facing. A helical transmembrane segment spans residues 11-31 (MLTLVLCAALIFFVIWQIIAF). Residues 32 to 72 (DELRTDFKNPIDQSNPTRARERILNIERICNLLRRLVVPEY) are Lumenal-facing. A helical transmembrane segment spans residues 73–93 (SIHGLFCLMFMCAGEWVTLGL). Topologically, residues 94 to 138 (NIPLLLYHLWRFFHRPADGSEVMYDPVSVMNADILNYCQKESWCK) are cytoplasmic. A helical transmembrane segment spans residues 139-159 (LGFYLLSFFYYLYSMVYALVS). A topological domain (lumenal) is located at residue Phe160.

Belongs to the cornichon family.

The protein localises to the membrane. In terms of biological role, regulates the trafficking and gating properties of AMPA-selective glutamate receptors (AMPARs). This is Protein cornichon homolog 2 (cnih2) from Danio rerio (Zebrafish).